The sequence spans 185 residues: Elongation factor P (185 aa).

Belongs to the elongation factor P family.

The protein resides in the cytoplasm. It functions in the pathway protein biosynthesis; polypeptide chain elongation. In terms of biological role, involved in peptide bond synthesis. Stimulates efficient translation and peptide-bond synthesis on native or reconstituted 70S ribosomes in vitro. Probably functions indirectly by altering the affinity of the ribosome for aminoacyl-tRNA, thus increasing their reactivity as acceptors for peptidyl transferase. This Listeria innocua serovar 6a (strain ATCC BAA-680 / CLIP 11262) protein is Elongation factor P.